The following is a 198-amino-acid chain: Endoribonuclease YbeY (198 aa).

Residues H156, H160, and H166 each coordinate Zn(2+).

Belongs to the endoribonuclease YbeY family. Requires Zn(2+) as cofactor.

It is found in the cytoplasm. Its function is as follows. Single strand-specific metallo-endoribonuclease involved in late-stage 70S ribosome quality control and in maturation of the 3' terminus of the 16S rRNA. This chain is Endoribonuclease YbeY, found in Cupriavidus necator (strain ATCC 17699 / DSM 428 / KCTC 22496 / NCIMB 10442 / H16 / Stanier 337) (Ralstonia eutropha).